Consider the following 821-residue polypeptide: BDNF/NT-3 growth factors receptor (821 aa).

The signal sequence occupies residues 1 to 31 (MSPWLKWHGPAMARLWGLCLLVLGFWRASLA). Intrachain disulfides connect Cys-32-Cys-38 and Cys-36-Cys-45. The LRRNT domain maps to 32 to 61 (CPTSCKCSSARIWCTEPSPGIVAFPRLEPN). At 32–429 (CPTSCKCSSA…DVADQSNREH (398 aa)) the chain is on the extracellular side. N-linked (GlcNAc...) asparagine glycans are attached at residues Asn-67, Asn-95, and Asn-121. 2 LRR repeats span residues 92–113 (GLRNLTIVDSGLKFVAYKAFLK) and 116–137 (NLRHINFTRNKLTSLSRRHFRH). Residues 148–196 (NPFTCSCDIMWLKTLQETKSSPDTQDLYCLNESSKNMPLANLQIPNCGL) form the LRRCT domain. Intrachain disulfides connect Cys-152/Cys-176 and Cys-154/Cys-194. 9 N-linked (GlcNAc...) asparagine glycosylation sites follow: Asn-178, Asn-205, Asn-241, Asn-254, Asn-280, Asn-325, Asn-338, Asn-350, and Asn-411. 2 Ig-like C2-type domains span residues 197 to 282 (PSAR…VNLT) and 301 to 365 (WCIP…MAKN). Cys-218 and Cys-266 are disulfide-bonded. Cys-302 and Cys-345 are oxidised to a cystine. A helical transmembrane segment spans residues 430–453 (LSVYAVVVIASVVGFCLLVMLLLL). The interaction with MAPK8IP3/JIP3 stretch occupies residues 454–465 (KLARHSKFGMKG). At 454–821 (KLARHSKFGM…ASPVYLDILG (368 aa)) the chain is on the cytoplasmic side. The segment at 474 to 497 (DDSASPLHHISNGSNTPSSSEGGP) is disordered. Over residues 484–494 (SNGSNTPSSSE) the composition is skewed to polar residues. Position 515 is a phosphotyrosine (Tyr-515). The 270-residue stretch at 537-806 (IVLKRELGEG…KNIKSIHTLL (270 aa)) folds into the Protein kinase domain. Residues 543–551 (LGEGAFGKV) and Lys-571 each bind ATP. Asp-675 functions as the Proton acceptor in the catalytic mechanism. Phosphotyrosine; by autocatalysis occurs at positions 701, 705, 706, and 816.

The protein belongs to the protein kinase superfamily. Tyr protein kinase family. Insulin receptor subfamily. Exists in a dynamic equilibrium between monomeric (low affinity) and dimeric (high affinity) structures. Interacts (phosphorylated upon activation by BDNF) with SHC1; mediates SHC1 phosphorylation and activation. Interacts (phosphorylated upon activation by BDNF) with PLCG1 and/or PLCG2; mediates PLCG1 phosphorylation and activation. Interacts with SH2B1 and SH2B2. Interacts with NGFR; may regulate the ligand specificity of the receptor. Interacts with SORCS2; this interaction is important for normal targeting to post-synaptic densities in response to high-frequency stimulation. Interacts (phosphorylated upon ligand-binding) with SH2D1A; regulates NTRK2. Interacts with SQSTM1 and KIDINS220. Interacts (phosphorylated upon ligand-binding) with FRS2; activates the MAPK signaling pathway. Interacts with APPL1. Interacts with MAPK8IP3/JIP3 and KLC1; interaction with KLC1 is mediated by MAPK8IP3/JIP3. Interacts with SORL1; this interaction facilitates NTRK2 trafficking between synaptic plasma membranes, postsynaptic densities and cell soma, hence positively regulates BDNF signaling. Interacts with SLITRK2. Post-translationally, phosphorylated. Undergoes ligand-mediated autophosphorylation that is required for interaction with SHC1 and PLCG1 and other downstream effectors. Some isoforms are not phosphorylated. Ubiquitinated. Undergoes polyubiquitination upon activation; regulated by NGFR. Ubiquitination regulates the internalization of the receptor. As to expression, expressed in the brain, in neurons (at protein level). Detected in hippocampus (at protein level). Widely expressed in the central and peripheral nervous system. The different forms are differentially expressed in various cell types. Isoform GP95-TRKB is specifically expressed in glial cells.

It is found in the cell membrane. Its subcellular location is the endosome membrane. The protein localises to the early endosome membrane. The protein resides in the cell projection. It localises to the axon. It is found in the dendrite. Its subcellular location is the cytoplasm. The protein localises to the perinuclear region. The protein resides in the postsynaptic density. The enzyme catalyses L-tyrosyl-[protein] + ATP = O-phospho-L-tyrosyl-[protein] + ADP + H(+). The formation of active receptors dimers able to fully transduce the ligand-mediated signal, may be negatively regulated by the formation of inactive heterodimers with the non-catalytic isoforms. The neuronal activity and the influx of calcium positively regulate the kinase activity and the internalization of the receptor which are both important for active signaling. Regulated by NGFR that may control the internalization of the receptor. NGFR may also stimulate the activation by BDNF compared to NTF3 and NTF4. SH2D1A inhibits the autophosphorylation of the receptor, and alters the recruitment and activation of downstream effectors and signaling cascades. In terms of biological role, receptor tyrosine kinase involved in the development and the maturation of the central and the peripheral nervous systems through regulation of neuron survival, proliferation, migration, differentiation, and synapse formation and plasticity. Receptor for BDNF/brain-derived neurotrophic factor and NTF4/neurotrophin-4. Alternatively can also bind NTF3/neurotrophin-3 which is less efficient in activating the receptor but regulates neuron survival through NTRK2. Upon ligand-binding, undergoes homodimerization, autophosphorylation and activation. Recruits, phosphorylates and/or activates several downstream effectors including SHC1, FRS2, SH2B1, SH2B2 and PLCG1 that regulate distinct overlapping signaling cascades. Through SHC1, FRS2, SH2B1, SH2B2 activates the GRB2-Ras-MAPK cascade that regulates for instance neuronal differentiation including neurite outgrowth. Through the same effectors controls the Ras-PI3 kinase-AKT1 signaling cascade that mainly regulates growth and survival. Through PLCG1 and the downstream protein kinase C-regulated pathways controls synaptic plasticity. Thereby, plays a role in learning and memory by regulating both short term synaptic function and long-term potentiation. PLCG1 also leads to NF-Kappa-B activation and the transcription of genes involved in cell survival. Hence, it is able to suppress anoikis, the apoptosis resulting from loss of cell-matrix interactions. Isoform GP95-TRKB may also play a role in neutrophin-dependent calcium signaling in glial cells and mediate communication between neurons and glia. This chain is BDNF/NT-3 growth factors receptor, found in Mus musculus (Mouse).